A 576-amino-acid polypeptide reads, in one-letter code: Homeobox protein invected (576 aa).

5 disordered regions span residues 1–68, 80–102, 305–344, 364–410, and 426–476; these read MSTL…DEQT, EVEE…NSVL, GGSV…LAQS, NSND…GEDS, and SDRP…RPRT. Acidic residues predominate over residues 80–91; that stretch reads EVEEEHDLDLED. Low complexity-rich tracts occupy residues 309-325, 364-381, and 395-405; these read SGSS…TNGN, NSND…TNTS, and AGAGATGASGK. Residues 450-468 are compositionally biased toward gly residues; the sequence is AGGGGGGVEKGEAADGGGV. Residues 471–530 constitute a DNA-binding region (homeobox); the sequence is DKRPRTAFSGTQLARLKHEFNENRYLTEKRRQQLSGELGLNEAQIKIWFQNKRAKLKKSS.

It belongs to the engrailed homeobox family. In terms of tissue distribution, expressed in row 6/7 of the embryonic neuroectoderm.

The protein localises to the nucleus. In terms of biological role, engrailed (en) and invected (inv) are functionally redundant transcription factors in neuronal precursor cell NB5-3 specification. Inv is unable to substitute for en in other regulatory processes such as maintaining gsb expression in the neuroectoderm after stage 10 of embryogenesis. Maintenance of gsb expression in row 5 of the neuroectoderm involves an as yet unidentified short range signaling molecule. This is Homeobox protein invected (inv) from Drosophila melanogaster (Fruit fly).